Consider the following 340-residue polypeptide: uncharacterized protein (340 aa).

This is an uncharacterized protein from Methanocaldococcus jannaschii (strain ATCC 43067 / DSM 2661 / JAL-1 / JCM 10045 / NBRC 100440) (Methanococcus jannaschii).